The primary structure comprises 218 residues: Putative glutamine transport system permease protein GlnP (218 aa).

The ABC transmembrane type-1 domain maps to 19–208; that stretch reads TLVTLKYSVI…ILVILISFIA (190 aa). 4 helical membrane-spanning segments follow: residues 25–45, 57–79, 86–108, and 187–207; these read YSVIAVILGLVIGMLLAICKV, FYTSIFRGTPLLVQLSIIYFAAP, FNVFMAGVISFALNSGAYVSEVI, and FFPMLIAACCYYILVILISFI.

The protein belongs to the binding-protein-dependent transport system permease family. HisMQ subfamily.

It is found in the cell inner membrane. Its function is as follows. Part of the binding-protein-dependent transport system for glutamine; probably responsible for the translocation of the substrate across the membrane. The polypeptide is Putative glutamine transport system permease protein GlnP (glnP) (Rickettsia prowazekii (strain Madrid E)).